Consider the following 436-residue polypeptide: MRQALPLVTRQGDRIAIVSGLRTPFARQATAFHGIPAVDLGKMVVGELLARSEIPADAIEQLVFGQVVQMPEAPNIAREIVLGTGMNVHTGAYSVSRACATSFQAVANVAESLMAGTIRAGIAGGADSSSVLPIGVSKALARALVDVNKARTTRQRLTLFSRLRLRDLLPVPPAVAEYSTGLRMGDTAEQMAKTYGITREQQDALAHRSHQRAAQAWAEGKLAEEVMTTYVPPYKNPFAEDNNIRGTSTLADYAKLRPAFDRKHGSVTAANSTPLTDGAAAVILMTESRAKELGLRPLGYLRSYAFTAIDVWQDMLLGPAWSTPLALERAGLTMADLTLFDMHEAFAAQTLANLQLLGSERFAREVLGRAQATGEVDDAKFNVLGGSIAYGHPFAATGARMITQTLHELRRRGGGFGLVTACAAGGLGAAMVLEAE.

Cys-99 acts as the Acyl-thioester intermediate in catalysis. Active-site proton acceptor residues include His-392 and Cys-422.

Belongs to the thiolase-like superfamily. Thiolase family. As to quaternary structure, heterotetramer of two alpha chains (FadJ) and two beta chains (FadI).

The protein localises to the cytoplasm. The enzyme catalyses an acyl-CoA + acetyl-CoA = a 3-oxoacyl-CoA + CoA. It functions in the pathway lipid metabolism; fatty acid beta-oxidation. Functionally, catalyzes the final step of fatty acid oxidation in which acetyl-CoA is released and the CoA ester of a fatty acid two carbons shorter is formed. This is 3-ketoacyl-CoA thiolase from Salmonella paratyphi C (strain RKS4594).